Reading from the N-terminus, the 96-residue chain is MEIKQHALAGTLESSDVQIMIAPANNGISIDLISDVKKQFGKQIEATVRQVLAAYAIENADVQVIDKGALDLVIKARAIAVVERAIEAKDLNWEVL.

O-(phosphoribosyl dephospho-coenzyme A)serine is present on Ser-14.

It belongs to the CitD family. In terms of assembly, oligomer with a subunit composition of (alpha,beta,gamma)6.

The protein resides in the cytoplasm. Its function is as follows. Covalent carrier of the coenzyme of citrate lyase. This Lactococcus lactis subsp. lactis (strain IL1403) (Streptococcus lactis) protein is Citrate lyase acyl carrier protein.